The primary structure comprises 64 residues: Large ribosomal subunit protein bL35 (64 aa).

The protein belongs to the bacterial ribosomal protein bL35 family.

The sequence is that of Large ribosomal subunit protein bL35 from Leifsonia xyli subsp. xyli (strain CTCB07).